The chain runs to 361 residues: Molybdenum import ATP-binding protein ModC (361 aa).

The region spanning 1–228 is the ABC transporter domain; it reads MLTINIEKQL…EQMRPWVPLQ (228 aa). 31 to 38 serves as a coordination point for ATP; that stretch reads GRSGAGKT. Residues 289 to 356 form the Mop domain; the sequence is RSSIRNVLKG…IKGVTMTQMD (68 aa).

Belongs to the ABC transporter superfamily. Molybdate importer (TC 3.A.1.8) family. As to quaternary structure, the complex is composed of two ATP-binding proteins (ModC), two transmembrane proteins (ModB) and a solute-binding protein (ModA).

Its subcellular location is the cell inner membrane. The catalysed reaction is molybdate(out) + ATP + H2O = molybdate(in) + ADP + phosphate + H(+). Its function is as follows. Part of the ABC transporter complex ModABC involved in molybdenum import. Responsible for energy coupling to the transport system. This is Molybdenum import ATP-binding protein ModC from Shewanella oneidensis (strain ATCC 700550 / JCM 31522 / CIP 106686 / LMG 19005 / NCIMB 14063 / MR-1).